Consider the following 81-residue polypeptide: uncharacterized protein (81 aa).

Transmembrane regions (helical) follow at residues 1-21 and 27-47; these read MTLF…FSLL and IFIY…HHFF.

It is found in the membrane. This is an uncharacterized protein from Saccharomyces cerevisiae (strain ATCC 204508 / S288c) (Baker's yeast).